Reading from the N-terminus, the 634-residue chain is Probable potassium transport system protein Kup (634 aa).

12 helical membrane-spanning segments follow: residues 19–39, 62–82, 113–133, 150–170, 177–197, 225–245, 259–279, 291–311, 349–369, 379–399, 406–426, and 431–451; these read AVGL…TSPL, VLSL…VIFV, FVVV…MITP, GLEH…FLIQ, IGIL…ALGV, IGVA…ALYA, WFLL…ATIL, LLAP…ATVI, IYIG…VLGF, YGVA…VVIW, LWLG…FFAA, and VVQG…LMST.

This sequence belongs to the HAK/KUP transporter (TC 2.A.72) family.

The protein localises to the cell inner membrane. The enzyme catalyses K(+)(in) + H(+)(in) = K(+)(out) + H(+)(out). Its function is as follows. Transport of potassium into the cell. Likely operates as a K(+):H(+) symporter. The protein is Probable potassium transport system protein Kup of Pseudomonas paraeruginosa (strain DSM 24068 / PA7) (Pseudomonas aeruginosa (strain PA7)).